Consider the following 1441-residue polypeptide: Probable ubiquitin-conjugating enzyme E2 R521 (1441 aa).

The helical transmembrane segment at 20–40 (YIHHIIINYITNSILYFFLIM) threads the bilayer. Residues 63–89 (NQSKLVNTLDIIKDEINKWEEKNTDKD) adopt a coiled-coil conformation. Residues 180-199 (VSKDKMKDKSESNSEHEQES) are compositionally biased toward basic and acidic residues. 2 disordered regions span residues 180–207 (VSKD…SNEI) and 283–305 (IFGK…MSKV). The span at 286 to 303 (KSKNSGPSSSKTSISSMS) shows a compositional bias: low complexity. Positions 340–368 (TTNEDNNDLDNLINEVERLVQETKDQETK) form a coiled coil. Positions 505–538 (TVEPVQEVAEEPVQQEVAEEPVQQEVAEEPVQQE) are enriched in low complexity. Disordered regions lie at residues 505-554 (TVEP…PVQK) and 577-605 (NDFS…NNLG). Acidic residues predominate over residues 539–549 (VAEEPVQEVAE). A UBC core domain is found at 1217–1380 (AISRELLSHS…VRFNCMKWAM (164 aa)). Residue C1306 is the Glycyl thioester intermediate of the active site.

It belongs to the ubiquitin-conjugating enzyme family.

The protein localises to the membrane. The enzyme catalyses S-ubiquitinyl-[E1 ubiquitin-activating enzyme]-L-cysteine + [E2 ubiquitin-conjugating enzyme]-L-cysteine = [E1 ubiquitin-activating enzyme]-L-cysteine + S-ubiquitinyl-[E2 ubiquitin-conjugating enzyme]-L-cysteine.. Its pathway is protein modification; protein ubiquitination. Functionally, catalyzes the covalent attachment of ubiquitin to other proteins. The sequence is that of Probable ubiquitin-conjugating enzyme E2 R521 from Acanthamoeba polyphaga (Amoeba).